The sequence spans 943 residues: Lysine-specific demethylase JMJ21 (943 aa).

The F-box domain maps to 14-60 (LGSLSVLPDETICVLLEYLAPRDIAHLACVSSVMYILCNEEPLWMSL). The JmjC domain maps to 216–379 (EAAPELLKDY…FVCLDMAPGY (164 aa)). Residues His262, Asp264, and His347 each coordinate Fe cation. Over residues 396 to 410 (NSEDLEEETHDEEDN) the composition is skewed to acidic residues. The disordered stretch occupies residues 396–438 (NSEDLEEETHDEEDNTLSYSDLTRKEKRTRMNGGGETENREED).

This sequence belongs to the JARID1 histone demethylase family. The cofactor is Fe(2+). Mostly expressed in leaves, and, to a lower extent, in inflorescences, roots, siliques and stems.

Its subcellular location is the nucleus. Its function is as follows. May function as histone H3 lysine demethylase and be involved in regulation of gene expression. The sequence is that of Lysine-specific demethylase JMJ21 from Arabidopsis thaliana (Mouse-ear cress).